A 419-amino-acid polypeptide reads, in one-letter code: D-mannonate dehydratase (419 aa).

Substrate contacts are provided by Asn-54 and His-139. The Proton donor/acceptor role is filled by Tyr-176. Residue Asp-227 participates in Mg(2+) binding. His-229 serves as the catalytic Proton donor/acceptor. Mg(2+)-binding residues include Glu-253 and Glu-279. 5 residues coordinate substrate: Glu-279, Arg-300, His-329, Asp-333, and Glu-356.

This sequence belongs to the mandelate racemase/muconate lactonizing enzyme family. GalD subfamily. It depends on Mg(2+) as a cofactor.

It carries out the reaction D-mannonate = 2-dehydro-3-deoxy-D-gluconate + H2O. It functions in the pathway carbohydrate metabolism; pentose and glucuronate interconversion. In terms of biological role, catalyzes the dehydration of D-mannonate. Has no detectable activity with a panel of 70 other acid sugars (in vitro). In Xanthomonas oryzae pv. oryzicola (strain BLS256), this protein is D-mannonate dehydratase.